Reading from the N-terminus, the 192-residue chain is Cysteine and glycine-rich protein 1 (192 aa).

Residues 10–61 form the LIM zinc-binding 1 domain; it reads CGVCQKAVYFAEEVQCEGSSFHKSCFLCMVCKKNLDSTTVAVHGDEIYCKSC. The Nuclear localization signal motif lies at 64–69; sequence KKYGPK. The 52-residue stretch at 118–169 folds into the LIM zinc-binding 2 domain; the sequence is CPRCGQAVYAAEKVIGAGKSWHKSCFRCAKCGKSLESTTLADKDGEIYCKGC.

Probable monomer. Interacts with ZYX. In terms of tissue distribution, most prominent in tissues that are enriched in smooth muscle cells, such as gizzard, stomach, and intestine. Lower level in the heart, no expression in liver, skeletal muscle, or brain.

It localises to the nucleus. The protein resides in the cytoplasm. The protein localises to the cytoskeleton. Its function is as follows. Heat stable protein, that interacts with zyxin/ZYX. May be a component of a signal transduction pathway that mediates adhesion-stimulated changes in gene expression. In Gallus gallus (Chicken), this protein is Cysteine and glycine-rich protein 1 (CSRP1).